The chain runs to 127 residues: Large ribosomal subunit protein bL17 (127 aa).

This sequence belongs to the bacterial ribosomal protein bL17 family. In terms of assembly, part of the 50S ribosomal subunit. Contacts protein L32.

The chain is Large ribosomal subunit protein bL17 from Lactobacillus helveticus (strain DPC 4571).